The primary structure comprises 259 residues: MNILISNDDGIQAAGVRCLAAALAQVGGHQITVVCPDRERSATGHALTLHKPLRVDPVREGFPPEVQAWACSGTPSDCVKLGLDGLLQQPPDWVIAGINQGANLGTDVLYSGTVSAAMEGLLEGIPSLAVSLASFTHQDFQPAAQVVLMLLEKLSLKPLEKPMLLNVNVPPLGLAEIRGMVLARLAWRKYTDLYEKRVDPRGKAYYWLAGEVVEEEVDPCSDVRAVAEGYVSITPLQPDLTAYAAFESLQRWGLSAFGF.

4 residues coordinate a divalent metal cation: Asp8, Asp9, Ser41, and Asn99.

This sequence belongs to the SurE nucleotidase family. A divalent metal cation is required as a cofactor.

It localises to the cytoplasm. It catalyses the reaction a ribonucleoside 5'-phosphate + H2O = a ribonucleoside + phosphate. Functionally, nucleotidase that shows phosphatase activity on nucleoside 5'-monophosphates. The sequence is that of 5'-nucleotidase SurE from Synechococcus sp. (strain JA-3-3Ab) (Cyanobacteria bacterium Yellowstone A-Prime).